A 689-amino-acid chain; its full sequence is Glycine--tRNA ligase beta subunit (689 aa).

This sequence belongs to the class-II aminoacyl-tRNA synthetase family. As to quaternary structure, tetramer of two alpha and two beta subunits.

It is found in the cytoplasm. It catalyses the reaction tRNA(Gly) + glycine + ATP = glycyl-tRNA(Gly) + AMP + diphosphate. This is Glycine--tRNA ligase beta subunit from Enterobacter sp. (strain 638).